A 459-amino-acid chain; its full sequence is Argininosuccinate lyase (459 aa).

This sequence belongs to the lyase 1 family. Argininosuccinate lyase subfamily.

The protein localises to the cytoplasm. It catalyses the reaction 2-(N(omega)-L-arginino)succinate = fumarate + L-arginine. The protein operates within amino-acid biosynthesis; L-arginine biosynthesis; L-arginine from L-ornithine and carbamoyl phosphate: step 3/3. The sequence is that of Argininosuccinate lyase from Sulfurihydrogenibium sp. (strain YO3AOP1).